We begin with the raw amino-acid sequence, 1219 residues long: Myosin-5 (1219 aa).

The segment covering 1 to 12 (MAILKRGARKKV) has biased composition (basic residues). The tract at residues 1-20 (MAILKRGARKKVHQEPAKRS) is disordered. Residues 36–715 (VGVSDLTLLS…TLFALEHMRD (680 aa)) form the Myosin motor domain. 129-136 (GESGAGKT) is a binding site for ATP. Residue serine 357 is modified to Phosphoserine. Position 359 is a phosphotyrosine (tyrosine 359). An actin-binding region spans residues 404-486 (SIGILDIYGF…PGIFAAMNDS (83 aa)). IQ domains are found at residues 719-739 (HNMA…RIDA) and 740-765 (ATKI…YGTK). One can recognise a TH1 domain in the interval 771–961 (KERRSMSLLG…TISVRRGNPP (191 aa)). Serine 777 is modified (phosphoserine). Over residues 951-964 (STISVRRGNPPNSQ) the composition is skewed to polar residues. 2 disordered regions span residues 951–1106 (STIS…SELP) and 1139–1167 (TAYM…VLNS). The segment covering 974-984 (SISSGYHASSS) has biased composition (low complexity). Serine 992 carries the phosphoserine modification. The span at 1030 to 1041 (NPASTLTASQSN) shows a compositional bias: polar residues. The segment covering 1048-1063 (TAATRATPAATPAAAA) has biased composition (low complexity). Residues 1072–1083 (IPPPPPPPPPSS) are compositionally biased toward pro residues. Residues 1085–1147 (PKEPMFEAAY…PTAYMKPHSG (63 aa)) form the SH3 domain. A Phosphoserine modification is found at serine 1205.

Belongs to the TRAFAC class myosin-kinesin ATPase superfamily. Myosin family. Interacts (via myosin motor domain) with SHE4; this interaction is important for proper localization and may regulate the interaction of the motor domain with actin. Interacts (via SH3 domain) with VRP1; this interaction is required for localization to sites of polarized growth and may regulate the interaction of the tail domain with actin. Interacts (via SH3 domain) with PAN1; this interaction is important for late stages of endocytopsis. Interacts (via SH3 domain) with BBC1 and LAS17. Interacts (via C-terminal acidic tail) with ARC19 and ARC40; ARC19 and ARC40 are Arp2/3 complex subunits. Interacts with BZZ1, PKH1, PKH2, YPK1 and YPK2. In terms of processing, phosphorylation of the TEDS site (Ser-357) is required for the polarization of the actin cytoskeleton and for ligand-induced, but not for constitutive internalization of STE2. Phosphorylation probably activates the myosin-I ATPase activity. Ser-357 is phosphorylated by YPK2 in vitro.

It is found in the cytoplasm. The protein localises to the cytoskeleton. The protein resides in the actin patch. In terms of biological role, one of two redundant type-I myosins implicated in the organization of the actin cytoskeleton. Required for proper actin cytoskeleton polarization and for the internalization step in endocytosis. At the cell cortex, assembles in patch-like structures together with proteins from the actin-polymerizing machinery and promotes actin assembly. Functions redundantly with LAS17 as actin nucleation-promoting factor (NPF) for the Arp2/3 complex. Motor domain phosphorylation by PAK kinases CLA4 and STE20 promotes CDC42-regulated actin assembly. Functions together with the NPF PAN1 in late stages of endocytosis. Motor domain phosphorylation by PDK1 kinases PKH1 and PKH2, and by SGK kinases YPK1 and YPK2, promotes ligand-induced, but not constitutive endocytosis of the G protein-coupled receptor STE2. This chain is Myosin-5 (MYO5), found in Saccharomyces cerevisiae (strain YJM789) (Baker's yeast).